The sequence spans 205 residues: Peptidyl-prolyl cis-trans isomerase B (205 aa).

The N-terminal stretch at 1-20 (MKFSGLWCWLLLFLSVNVIA) is a signal peptide. Positions 39–198 (FFDIEHGEEK…EAVKIAKCGE (160 aa)) constitute a PPIase cyclophilin-type domain.

The protein belongs to the cyclophilin-type PPIase family. PPIase B subfamily.

It is found in the secreted. It catalyses the reaction [protein]-peptidylproline (omega=180) = [protein]-peptidylproline (omega=0). Cyclosporin A (CsA) inhibits CYPB. Its function is as follows. PPIases accelerate the folding of proteins. It catalyzes the cis-trans isomerization of proline imidic peptide bonds in oligopeptides. The sequence is that of Peptidyl-prolyl cis-trans isomerase B (CPR2) from Saccharomyces cerevisiae (strain ATCC 204508 / S288c) (Baker's yeast).